A 675-amino-acid polypeptide reads, in one-letter code: Pescadillo homolog (675 aa).

The segment at A309–D331 is disordered. In terms of domain architecture, BRCT spans E352–P471. Residues L475–K675 are disordered. The span at E498–A518 shows a compositional bias: acidic residues. A compositionally biased stretch (basic and acidic residues) spans T519–V530. Composition is skewed to acidic residues over residues S532–V541 and G549–E580. Positions D551–K675 form a coiled coil. A compositionally biased stretch (basic and acidic residues) spans A581–E591. A compositionally biased stretch (basic residues) spans K611–K623. Residues R624–K634 are compositionally biased toward basic and acidic residues.

Belongs to the pescadillo family. In terms of assembly, component of the NOP7 complex, composed of erb1, nop7 and ytm1. The complex is held together by erb1, which interacts with nop7 via its N-terminal domain and with ytm1 via a high-affinity interaction between the seven-bladed beta-propeller domains of the 2 proteins. The NOP7 complex associates with the 66S pre-ribosome.

It is found in the nucleus. The protein localises to the nucleolus. The protein resides in the nucleoplasm. Component of the NOP7 complex, which is required for maturation of the 25S and 5.8S ribosomal RNAs and formation of the 60S ribosome. In Aspergillus fumigatus (strain CBS 144.89 / FGSC A1163 / CEA10) (Neosartorya fumigata), this protein is Pescadillo homolog (nop7).